A 231-amino-acid polypeptide reads, in one-letter code: 7-cyano-7-deazaguanine synthase (231 aa).

11-21 (LSAGLDSTVNA) is an ATP binding site. Positions 197, 205, 208, and 211 each coordinate Zn(2+).

It belongs to the QueC family. Requires Zn(2+) as cofactor.

The enzyme catalyses 7-carboxy-7-deazaguanine + NH4(+) + ATP = 7-cyano-7-deazaguanine + ADP + phosphate + H2O + H(+). Its pathway is purine metabolism; 7-cyano-7-deazaguanine biosynthesis. In terms of biological role, catalyzes the ATP-dependent conversion of 7-carboxy-7-deazaguanine (CDG) to 7-cyano-7-deazaguanine (preQ(0)). The polypeptide is 7-cyano-7-deazaguanine synthase (Bdellovibrio bacteriovorus (strain ATCC 15356 / DSM 50701 / NCIMB 9529 / HD100)).